The primary structure comprises 362 residues: 3-isopropylmalate dehydrogenase (362 aa).

78 to 91 is an NAD(+) binding site; it reads GPQWDTLPSDKRPE. The substrate site is built by Arg98, Arg108, Arg136, and Asp226. Positions 226, 250, and 254 each coordinate Mg(2+). An NAD(+)-binding site is contributed by 284–296; that stretch reads GSAPDIAGQDKAN.

It belongs to the isocitrate and isopropylmalate dehydrogenases family. LeuB type 1 subfamily. Homodimer. Mg(2+) serves as cofactor. It depends on Mn(2+) as a cofactor.

Its subcellular location is the cytoplasm. The enzyme catalyses (2R,3S)-3-isopropylmalate + NAD(+) = 4-methyl-2-oxopentanoate + CO2 + NADH. The protein operates within amino-acid biosynthesis; L-leucine biosynthesis; L-leucine from 3-methyl-2-oxobutanoate: step 3/4. Functionally, catalyzes the oxidation of 3-carboxy-2-hydroxy-4-methylpentanoate (3-isopropylmalate) to 3-carboxy-4-methyl-2-oxopentanoate. The product decarboxylates to 4-methyl-2 oxopentanoate. The polypeptide is 3-isopropylmalate dehydrogenase (Gloeobacter violaceus (strain ATCC 29082 / PCC 7421)).